The primary structure comprises 147 residues: Large ribosomal subunit protein bL9 (147 aa).

Belongs to the bacterial ribosomal protein bL9 family.

Functionally, binds to the 23S rRNA. The protein is Large ribosomal subunit protein bL9 of Mycoplasmoides gallisepticum (strain R(low / passage 15 / clone 2)) (Mycoplasma gallisepticum).